Here is a 445-residue protein sequence, read N- to C-terminus: CBL-interacting serine/threonine-protein kinase 8 (445 aa).

Positions 9-262 (YELGRTIGEG…IAEIRKDEWF (254 aa)) constitute a Protein kinase domain. ATP contacts are provided by residues 15-23 (IGEGTFAKV) and Lys38. The active-site Proton acceptor is the Asp132. An activation loop region spans residues 150–177 (DFGLSALPEQGVTILKTTCGTPNYVAPE). A Phosphoserine modification is found at Ser154. Phosphothreonine is present on Thr166. The 25-residue stretch at 302–326 (TGPLTLNAFDLIILSQGLNLATLFD) folds into the NAF domain. The interval 333 to 362 (KHQTRFISHKPANVVLSSMEVVSQSMGFKT) is PPI.

The protein belongs to the protein kinase superfamily. CAMK Ser/Thr protein kinase family. SNF1 subfamily. As to quaternary structure, interacts with CBL1 and CBL9. Mn(2+) is required as a cofactor. As to expression, mostly expressed in roots, and, to a lower extent, in leaves, stems, flowers, and siliques.

It catalyses the reaction L-seryl-[protein] + ATP = O-phospho-L-seryl-[protein] + ADP + H(+). The enzyme catalyses L-threonyl-[protein] + ATP = O-phospho-L-threonyl-[protein] + ADP + H(+). Functionally, CIPK serine-threonine protein kinases interact with CBL proteins. Binding of a CBL protein to the regulatory NAF domain of CIPK protein lead to the activation of the kinase in a calcium-dependent manner. This chain is CBL-interacting serine/threonine-protein kinase 8 (CIPK8), found in Arabidopsis thaliana (Mouse-ear cress).